Here is a 138-residue protein sequence, read N- to C-terminus: Phosphoribosyl-AMP cyclohydrolase (138 aa).

Mg(2+) is bound at residue D84. C85 contributes to the Zn(2+) binding site. Residues D86 and D88 each coordinate Mg(2+). Zn(2+) contacts are provided by C102 and C109.

It belongs to the PRA-CH family. As to quaternary structure, homodimer. It depends on Mg(2+) as a cofactor. Requires Zn(2+) as cofactor.

The protein localises to the cytoplasm. The catalysed reaction is 1-(5-phospho-beta-D-ribosyl)-5'-AMP + H2O = 1-(5-phospho-beta-D-ribosyl)-5-[(5-phospho-beta-D-ribosylamino)methylideneamino]imidazole-4-carboxamide. It participates in amino-acid biosynthesis; L-histidine biosynthesis; L-histidine from 5-phospho-alpha-D-ribose 1-diphosphate: step 3/9. Functionally, catalyzes the hydrolysis of the adenine ring of phosphoribosyl-AMP. The polypeptide is Phosphoribosyl-AMP cyclohydrolase (Burkholderia ambifaria (strain ATCC BAA-244 / DSM 16087 / CCUG 44356 / LMG 19182 / AMMD) (Burkholderia cepacia (strain AMMD))).